We begin with the raw amino-acid sequence, 380 residues long: GTP-binding protein 10 (380 aa).

Residues 13–148 enclose the Obg domain; sequence GNFVDNVRLY…RNIRLDLKLI (136 aa). The region spanning 149–344 is the OBG-type G domain; the sequence is ADFGLVGFPN…LKSLIRQSLE (196 aa). Residues 155 to 162, 202 to 206, and 278 to 281 contribute to the GTP site; these read GFPNAGKS, DLPGL, and NKMD.

This sequence belongs to the TRAFAC class OBG-HflX-like GTPase superfamily. OBG GTPase family.

Its subcellular location is the nucleus. The protein localises to the nucleolus. May be involved in the ribosome maturation process. The sequence is that of GTP-binding protein 10 (gtpbp10) from Danio rerio (Zebrafish).